A 1141-amino-acid chain; its full sequence is MAASRSSSRISFAKIIEPLEVPDLLALQTQSFDWLIGSDAWAERVQEAIDSGRDDVPITSGLEEVFKEISPIEDFSGSMSLSFRDHRFEPPKYSVEECKDKDMTFSAPLFVTAEFTNNNTGEIKSQTVFMGDFPLMTPKGTFVINGTERVVVSQLVRSPGVYFERSLDKASDKDLYSCKVIPSRGAWLEFEIDKRDTVGVRIDRKRRQSVTVLLKALGWDEARILERFGDFPSMRITLEKDHTAGQDDALLDIYRKLRPGEPPTRESAQTLLENLFFNPKRYDLAKVGRYKVNKKLSLGVAHDVGVLTENDIVRTIEYVVKLHAGADPAEYEVDDIDHFGNRRIRTVGELIQNQVRLGLARMERVVRERMTTQDVEAITPQTLINIRPVVASIKEFFGTSQLSQFMDQTNPLAGLTHKRRLNALGPGGLSRERAGFEVRDVHPSHYGRMCPIETPEGPNIGLIGSLSTFARVNPFGFIETPYRKVENGRVTGQIDWLTADEEDRHVKAQANTPLRPDGSFAEDRVLVRRKGGEVEFIPPDEVDYMDVSPRQMVSVATAMIPFLEHDDANRALMGSNMQRQSVPLLRSEAPLVGTGMEARAAKDAGDVVVCAQAGVVEDLSADYITVMHDDGTRRTYRLAKFRRSNQGTCINQKPIVNEGDRVGAGQVIADGPCTDNGEMALGKNLLVAFMPWEGHNYEDAIILSQRLVQDDVLSSIHIEEHEVDARDTKLGPEEITRDIPNVAEEVLADLDERGIIRIGAEVSPGDVLVGKVTPKGETELTPEERLLRAIFGEKAREVRDTSLKVPHGESGKVIGVRVFSREDGDELPPGVNELVRVYVAQKRKITDGDKLAGRHGNKGVIAKILPAEDMPFLEDGTPVDVVLNPHGVPRRMNIGQILETHLGWVAKTGWQVDSGTEDWKERLRGIGADAASAGTNVATPVFDGAREEEITGLLDSTLPNRDGIQLIGSSGKAKLFDGRTGEPYPYPVAVGYIYILKLLHLVDDKIHARSTGPYSMITQQPLGGKAQFGGQRFGEMEVWALEAYGAAYALQELLTIKSDDVVGRVKVYEAIVKGENIPEPGIPESFKVLIKEMQSLCLNVEVLSSDGVQIEMRDTDEDVFRAAEELGIDLSRREPSSVEEV.

Belongs to the RNA polymerase beta chain family. The RNAP catalytic core consists of 2 alpha, 1 beta, 1 beta' and 1 omega subunit. When a sigma factor is associated with the core the holoenzyme is formed, which can initiate transcription.

It catalyses the reaction RNA(n) + a ribonucleoside 5'-triphosphate = RNA(n+1) + diphosphate. DNA-dependent RNA polymerase catalyzes the transcription of DNA into RNA using the four ribonucleoside triphosphates as substrates. The chain is DNA-directed RNA polymerase subunit beta from Frankia casuarinae (strain DSM 45818 / CECT 9043 / HFP020203 / CcI3).